The sequence spans 219 residues: Large ribosomal subunit protein uL3 (219 aa).

This sequence belongs to the universal ribosomal protein uL3 family. Part of the 50S ribosomal subunit. Forms a cluster with proteins L14 and L19.

In terms of biological role, one of the primary rRNA binding proteins, it binds directly near the 3'-end of the 23S rRNA, where it nucleates assembly of the 50S subunit. This is Large ribosomal subunit protein uL3 from Salinispora arenicola (strain CNS-205).